We begin with the raw amino-acid sequence, 376 residues long: tRNA-specific 2-thiouridylase MnmA (376 aa).

ATP is bound by residues 17-24 and Met43; that span reads GMSGGVDS. An interaction with target base in tRNA region spans residues 103–105; the sequence is NPD. Cys108 (nucleophile) is an active-site residue. An intrachain disulfide couples Cys108 to Cys205. Position 132 (Gly132) interacts with ATP. The tract at residues 155-157 is interaction with tRNA; that stretch reads KDQ. Cys205 (cysteine persulfide intermediate) is an active-site residue. The tract at residues 315-316 is interaction with tRNA; sequence RY.

The protein belongs to the MnmA/TRMU family.

The protein localises to the cytoplasm. It catalyses the reaction S-sulfanyl-L-cysteinyl-[protein] + uridine(34) in tRNA + AH2 + ATP = 2-thiouridine(34) in tRNA + L-cysteinyl-[protein] + A + AMP + diphosphate + H(+). Its function is as follows. Catalyzes the 2-thiolation of uridine at the wobble position (U34) of tRNA, leading to the formation of s(2)U34. This chain is tRNA-specific 2-thiouridylase MnmA, found in Dichelobacter nodosus (strain VCS1703A).